The sequence spans 251 residues: Hydroxyacylglutathione hydrolase (251 aa).

7 residues coordinate Zn(2+): histidine 53, histidine 55, aspartate 57, histidine 58, histidine 110, aspartate 127, and histidine 165.

Belongs to the metallo-beta-lactamase superfamily. Glyoxalase II family. As to quaternary structure, monomer. It depends on Zn(2+) as a cofactor.

The enzyme catalyses an S-(2-hydroxyacyl)glutathione + H2O = a 2-hydroxy carboxylate + glutathione + H(+). It participates in secondary metabolite metabolism; methylglyoxal degradation; (R)-lactate from methylglyoxal: step 2/2. Thiolesterase that catalyzes the hydrolysis of S-D-lactoyl-glutathione to form glutathione and D-lactic acid. The polypeptide is Hydroxyacylglutathione hydrolase (Escherichia coli (strain SMS-3-5 / SECEC)).